Consider the following 348-residue polypeptide: UDP-glucose 4-epimerase (348 aa).

Threonine 125 contributes to the substrate binding site. Tyrosine 149 functions as the Proton acceptor in the catalytic mechanism.

This sequence belongs to the NAD(P)-dependent epimerase/dehydratase family. Requires NAD(+) as cofactor.

It catalyses the reaction UDP-alpha-D-glucose = UDP-alpha-D-galactose. It participates in carbohydrate metabolism; galactose metabolism. It functions in the pathway glycan metabolism; exopolysaccharide biosynthesis. This chain is UDP-glucose 4-epimerase (exoB), found in Azospirillum brasilense.